The following is a 592-amino-acid chain: Pectinesterase/pectinesterase inhibitor 3 (592 aa).

Residues 1-35 form the signal peptide; it reads MAPSMKEIFSKDNFKKNKKLVLLSAAVALLFVAAV. Residues 36–238 constitute a propeptide, removed in mature 42 kDa form; the sequence is AGISAGASKA…KITSNNRKLK (203 aa). The propeptide at 36 to 273 is removed in mature 38 kDa form; that stretch reads AGISAGASKA…WLSAGDRRLL (238 aa). A pectinesterase inhibitor 3 region spans residues 53-212; it reads PSSHAVLRSS…EHMCSNALAM (160 aa). 2 N-linked (GlcNAc...) asparagine glycosylation sites follow: Asn-96 and Asn-215. Positions 281–578 are pectinesterase 3; sequence DATVAADGSG…YTAGQFIGGG (298 aa). Positions 356 and 386 each coordinate substrate. Asp-409 acts as the Proton donor; for pectinesterase activity in catalysis. A disulfide bond links Cys-423 and Cys-443. The active-site Nucleophile; for pectinesterase activity is the Asp-430. Gln-454, Arg-498, and Trp-500 together coordinate substrate.

It in the N-terminal section; belongs to the PMEI family. In the C-terminal section; belongs to the pectinesterase family. In terms of assembly, interacts with BIIDXI and At5g11420. Binds reversibly to PMEI4, PMEI7 and PMEI8 to be inhibited; the stability of the PME3-PMEIs complexes and the inhibition of the pectin methylesterase (PME) activity is pH-dependent, based on protonation status of amino-acids at the complex interface. Expressed in roots, cotyledons, hypocotyls, seedlings, leaves, stems, flowers, dry seeds and siliques. Accumulates in etiolated hypocotyls (at protein level).

It is found in the secreted. The protein resides in the extracellular space. The protein localises to the apoplast. Its subcellular location is the cell wall. It catalyses the reaction [(1-&gt;4)-alpha-D-galacturonosyl methyl ester](n) + n H2O = [(1-&gt;4)-alpha-D-galacturonosyl](n) + n methanol + n H(+). It functions in the pathway glycan metabolism; pectin degradation; 2-dehydro-3-deoxy-D-gluconate from pectin: step 1/5. Regulated negatively by pectinesterase inhibitors (e.g. PMEI3, PMEI4, PMEI7 and PMEI9) in a pH-dependent manner, mainly in slightly acidic conditions (pH 6.0 and 5.0), especially in dark-grown hypocotyls; this processus relies on changes in the protonation of amino acids involved in intermolecular and intramolecular interactions. In terms of biological role, acts in the modification of cell walls via demethylesterification of cell wall pectin. Required for zinc Zn(2+) homeostasis and to monitor Zn(2+) influence on cell wall-controlled growth processes such as root cell elongation. Monitors seed germination and favors root hairs production. Prevents cruciferin seed storage proteins activity, but promotes the expression of genes involved in cell wall organization and remodeling as well as genes involved in lipid and protein metabolism, during post-germinative growth of seedlings. Confers sensitivity to Zn(2+) when overexpressed. Acts as a susceptibility factor required for the initial colonization of the host tissue by virulent pathogens including Botrytis cinerea and Pectobacterium carotovorum, probably by facilitating cell wall pectine degradation by pathogen pectic enzymes after its demethylesterification. This chain is Pectinesterase/pectinesterase inhibitor 3, found in Arabidopsis thaliana (Mouse-ear cress).